Reading from the N-terminus, the 269-residue chain is 4-hydroxy-tetrahydrodipicolinate reductase (269 aa).

Residues 8-13 (GAGGRM) and glutamate 34 each bind NAD(+). Arginine 35 serves as a coordination point for NADP(+). NAD(+) is bound by residues 98–100 (GTT) and 122–125 (ASNY). Histidine 155 serves as the catalytic Proton donor/acceptor. Histidine 156 contributes to the (S)-2,3,4,5-tetrahydrodipicolinate binding site. Lysine 159 functions as the Proton donor in the catalytic mechanism. 165–166 (GT) is a binding site for (S)-2,3,4,5-tetrahydrodipicolinate.

It belongs to the DapB family.

The protein resides in the cytoplasm. The enzyme catalyses (S)-2,3,4,5-tetrahydrodipicolinate + NAD(+) + H2O = (2S,4S)-4-hydroxy-2,3,4,5-tetrahydrodipicolinate + NADH + H(+). It carries out the reaction (S)-2,3,4,5-tetrahydrodipicolinate + NADP(+) + H2O = (2S,4S)-4-hydroxy-2,3,4,5-tetrahydrodipicolinate + NADPH + H(+). It participates in amino-acid biosynthesis; L-lysine biosynthesis via DAP pathway; (S)-tetrahydrodipicolinate from L-aspartate: step 4/4. Catalyzes the conversion of 4-hydroxy-tetrahydrodipicolinate (HTPA) to tetrahydrodipicolinate. The sequence is that of 4-hydroxy-tetrahydrodipicolinate reductase from Haemophilus ducreyi (strain 35000HP / ATCC 700724).